The primary structure comprises 104 residues: MYAVVVTGGKQYKVAEGDVLFVEKLTADVDSTVELDNVLLVGKDNGETVVGKPMVEGAKVTAKVLAQGKAKKVVVFKYKPKKDYRKKQGHRQPYTKIQIEKINA.

The protein belongs to the bacterial ribosomal protein bL21 family. As to quaternary structure, part of the 50S ribosomal subunit. Contacts protein L20.

Its function is as follows. This protein binds to 23S rRNA in the presence of protein L20. The sequence is that of Large ribosomal subunit protein bL21 from Clostridium botulinum (strain 657 / Type Ba4).